The primary structure comprises 844 residues: E3 ubiquitin-protein ligase BRE1-like 2 (844 aa).

Coiled coils occupy residues 1-38 (MDAAALQYENQKLVQQLEAQKSKMRALEGKFKELRDEQ) and 160-240 (EDVI…QLQT). Residues 244 to 269 (SLMNTSAPNGVNGSVSTDKSSDKGMG) are disordered. Residues 245–261 (LMNTSAPNGVNGSVSTD) show a composition bias toward polar residues. Coiled coils occupy residues 290–604 (ELHE…SEIE) and 640–670 (KMKQAYGSLLAEKNMLQKQLQHVNSSLESSK). Residues 792–831 (CGVCFDRPKEVVITKCFHLFCSPCIQRNLEIRHRKCPGCG) form an RING-type zinc finger.

The protein belongs to the BRE1 family.

The protein localises to the nucleus. The catalysed reaction is S-ubiquitinyl-[E2 ubiquitin-conjugating enzyme]-L-cysteine + [acceptor protein]-L-lysine = [E2 ubiquitin-conjugating enzyme]-L-cysteine + N(6)-ubiquitinyl-[acceptor protein]-L-lysine.. The protein operates within protein modification; protein ubiquitination. Its function is as follows. E3 ubiquitin-protein ligase that monoubiquitinates H2B to form H2BK143ub1. H2BK143ub1 gives a specific tag for epigenetic transcriptional activation and is also prerequisite for H3K4me and maybe H3K79me. It thereby plays a central role in histone code and gene regulation. Forms a ubiquitin ligase complex in cooperation with the E2 enzyme UBC2/RAD6. The sequence is that of E3 ubiquitin-protein ligase BRE1-like 2 (BRE1B) from Oryza sativa subsp. indica (Rice).